The primary structure comprises 179 residues: Small ribosomal subunit protein uS7 (179 aa).

It belongs to the universal ribosomal protein uS7 family. As to quaternary structure, part of the 30S ribosomal subunit. Contacts proteins S9 and S11.

In terms of biological role, one of the primary rRNA binding proteins, it binds directly to 16S rRNA where it nucleates assembly of the head domain of the 30S subunit. Is located at the subunit interface close to the decoding center, probably blocks exit of the E-site tRNA. This is Small ribosomal subunit protein uS7 from Shigella flexneri serotype 5b (strain 8401).